A 535-amino-acid polypeptide reads, in one-letter code: Alpha-1,3-mannosyl-glycoprotein 4-beta-N-acetylglucosaminyltransferase A (535 aa).

The Cytoplasmic segment spans residues 1 to 6 (MRLRNG). The helical; Signal-anchor for type II membrane protein transmembrane segment at 7-27 (TVATALVFVTSFLTLSWYTTW) threads the bilayer. The stretch at 28 to 63 (QNGKEKLIAYQREFLALKERLRVAEHRISQRSSELN) forms a coiled coil. Residues 28 to 535 (QNGKEKLIAY…NEIHIKKVTS (508 aa)) lie on the Lumenal side of the membrane. N77 and N458 each carry an N-linked (GlcNAc...) asparagine glycan. At S474 the chain carries Phosphoserine.

It belongs to the glycosyltransferase 54 family. Requires a divalent metal cation as cofactor. N-glycosylated.

The protein localises to the golgi apparatus membrane. It localises to the secreted. The enzyme catalyses N(4)-{beta-D-GlcNAc-(1-&gt;2)-alpha-D-Man-(1-&gt;3)-[beta-D-GlcNAc-(1-&gt;2)-alpha-D-Man-(1-&gt;6)]-beta-D-Man-(1-&gt;4)-beta-D-GlcNAc-(1-&gt;4)-beta-D-GlcNAc}-L-asparaginyl-[protein] + UDP-N-acetyl-alpha-D-glucosamine = N(4)-{beta-D-GlcNAc-(1-&gt;2)-[beta-D-GlcNAc-(1-&gt;4)]-alpha-D-Man-(1-&gt;3)-[beta-D-GlcNAc-(1-&gt;2)-alpha-D-Man-(1-&gt;6)]-beta-D-Man-(1-&gt;4)-beta-D-GlcNAc-(1-&gt;4)-beta-D-GlcNAc}-L-asparaginyl-[protein] + UDP + H(+). The catalysed reaction is an N(4)-{beta-D-GlcNAc-(1-&gt;2)-alpha-D-Man-(1-&gt;3)-[alpha-D-Man-(1-&gt;6)]-beta-D-Man-(1-&gt;4)-beta-D-GlcNAc-(1-&gt;4)-beta-D-GlcNAc}-L-asparaginyl-[protein] + UDP-N-acetyl-alpha-D-glucosamine = an N(4)-{beta-D-GlcNAc-(1-&gt;2)-[beta-D-GlcNAc-(1-&gt;4)]-alpha-D-Man-(1-&gt;3)-[alpha-D-Man-(1-&gt;6)]-beta-D-Man-(1-&gt;4)-beta-D-GlcNAc-(1-&gt;4)-beta-D-GlcNAc}-L-asparaginyl-[protein] + UDP + H(+). It catalyses the reaction an N(4)-{beta-D-GlcNAc-(1-&gt;2)-alpha-D-Man-(1-&gt;3)-[beta-D-GlcNAc-(1-&gt;2)-[beta-D-GlcNAc-(1-&gt;6)]-alpha-D-Man-(1-&gt;6)]-beta-D-Man-(1-&gt;4)-beta-D-GlcNAc-(1-&gt;4)-beta-D-GlcNAc}-L-asparaginyl-[protein] + UDP-N-acetyl-alpha-D-glucosamine = an N(4)-{beta-D-GlcNAc-(1-&gt;2)-[beta-D-GlcNAc-(1-&gt;4)]-alpha-D-Man-(1-&gt;3)-[beta-D-GlcNAc-(1-&gt;2)-[beta-D-GlcNAc-(1-&gt;6)]-alpha-D-Man-(1-&gt;6)]-beta-D-Man-(1-&gt;4)-beta-D-GlcNAc-(1-&gt;4)-beta-D-GlcNAc}-L-asparaginyl-[protein] + UDP + H(+). It carries out the reaction an N(4)-{beta-D-GlcNAc-(1-&gt;2)-alpha-D-Man-(1-&gt;3)-[beta-D-GlcNAc-(1-&gt;2)-alpha-D-Man-(1-&gt;6)]-beta-D-Man-(1-&gt;4)-beta-D-GlcNAc-(1-&gt;4)-[alpha-L-Fuc-(1-&gt;6)]-beta-D-GlcNAc}-L-asparaginyl-[protein] + UDP-N-acetyl-alpha-D-glucosamine = N(4)-{beta-D-GlcNAc-(1-&gt;2)-[beta-D-GlcNAc-(1-&gt;4)]-alpha-D-Man-(1-&gt;3)-[beta-D-GlcNAc-(1-&gt;2)-alpha-D-Man-(1-&gt;6)]-beta-D-Man-(1-&gt;4)-beta-D-GlcNAc-(1-&gt;4)-[alpha-L-Fuc-(1-&gt;6)]-beta-D-GlcNAc}-asparaginyl-[protein] + UDP + H(+). The enzyme catalyses an N(4)-{beta-D-GlcNAc-(1-&gt;2)-alpha-D-Man-(1-&gt;3)-[beta-D-Gal-(1-&gt;4)-beta-D-GlcNAc-(1-&gt;2)-alpha-D-Man-(1-&gt;6)]-beta-D-Man-(1-&gt;4)-beta-D-GlcNAc-(1-&gt;4)-beta-D-GlcNAc}-L-asparaginyl-[protein] + UDP-N-acetyl-alpha-D-glucosamine = an N(4)-{beta-D-GlcNAc-(1-&gt;2)-[beta-D-GlcNAc-(1-&gt;4)]-alpha-D-Man-(1-&gt;3)-[beta-D-Gal-(1-&gt;4)-beta-D-GlcNAc-(1-&gt;2)-alpha-D-Man-(1-&gt;6)]-beta-D-Man-(1-&gt;4)-beta-D-GlcNAc-(1-&gt;4)-beta-D-GlcNAc}-L-asparaginyl-[protein] + UDP + H(+). The catalysed reaction is N(4)-{beta-D-GlcNAc-(1-&gt;2)-alpha-D-Man-(1-&gt;3)-[alpha-D-Man-(1-&gt;3)-{alpha-D-Man-(1-&gt;6)}-alpha-D-Man-(1-&gt;6)]-beta-D-Man-(1-&gt;4)-beta-D-GlcNAc-(1-&gt;4)-beta-D-GlcNAc}-asparaginyl-[protein] + UDP-N-acetyl-alpha-D-glucosamine = N(4)-{beta-D-GlcNAc-(1-&gt;2)-[beta-D-GlcNAc-(1-&gt;4)]-alpha-D-Man-(1-&gt;3)-[alpha-D-Man-(1-&gt;3)-{alpha-D-Man-(1-&gt;6)}-alpha-D-Man-(1-&gt;6)]-beta-D-Man-(1-&gt;4)-beta-D-GlcNAc-(1-&gt;4)-beta-D-GlcNAc}-asparaginyl-[protein] + UDP + H(+). It catalyses the reaction N(4)-{beta-D-GlcNAc-(1-&gt;2)-alpha-D-Man-(1-&gt;3)-beta-D-Man-(1-&gt;4)-beta-D-GlcNAc-(1-&gt;4)-beta-D-GlcNAc}-asparaginyl-[protein] + UDP-N-acetyl-alpha-D-glucosamine = N(4)-{beta-D-GlcNAc-(1-&gt;2)-[beta-D-GlcNAc-(1-&gt;4)]-alpha-D-Man-(1-&gt;3)-beta-D-Man-(1-&gt;4)-beta-D-GlcNAc-(1-&gt;4)-beta-D-GlcNAc}-asparaginyl-[protein] + UDP + H(+). It functions in the pathway protein modification; protein glycosylation. With respect to regulation, inhibited by UDP. Functionally, glycosyltransferase that catalyze the transfer of GlcNAc from UDP-GlcNAc to the GlcNAcbeta1-2Manalpha1-3 arm of the core structure of N-linked glycans through a beta1-4 linkage and participates in the production of tri- and tetra-antennary N-linked sugar chains. Involved in glucose transport by mediating SLC2A2/GLUT2 glycosylation, thereby controlling cell-surface expression of SLC2A2 in pancreatic beta cells. This chain is Alpha-1,3-mannosyl-glycoprotein 4-beta-N-acetylglucosaminyltransferase A, found in Mus musculus (Mouse).